Reading from the N-terminus, the 327-residue chain is L-lactate dehydrogenase (327 aa).

NAD(+)-binding positions include Val18, Asp39, Lys44, Tyr69, and 83-84; that span reads GA. Substrate contacts are provided by residues Gln86, Arg92, and 124–127; that span reads NPVD. NAD(+)-binding positions include 122-124 and Ser147; that span reads AAN. 152-155 contributes to the substrate binding site; the sequence is DSAR. Residues Arg157 and His172 each coordinate beta-D-fructose 1,6-bisphosphate. His179 serves as the catalytic Proton acceptor. Tyr224 is modified (phosphotyrosine). A substrate-binding site is contributed by Thr233.

The protein belongs to the LDH/MDH superfamily. LDH family. Homotetramer.

It is found in the cytoplasm. It catalyses the reaction (S)-lactate + NAD(+) = pyruvate + NADH + H(+). It participates in fermentation; pyruvate fermentation to lactate; (S)-lactate from pyruvate: step 1/1. With respect to regulation, allosterically activated by fructose 1,6-bisphosphate (FBP). In terms of biological role, catalyzes the conversion of lactate to pyruvate. This chain is L-lactate dehydrogenase, found in Streptococcus pyogenes serotype M3 (strain SSI-1).